The sequence spans 427 residues: 3-phosphoshikimate 1-carboxyvinyltransferase (427 aa).

Residues K22, S23, and R27 each coordinate 3-phosphoshikimate. K22 contacts phosphoenolpyruvate. Phosphoenolpyruvate is bound by residues G93 and R122. Residues S167, Q169, D315, and K342 each contribute to the 3-phosphoshikimate site. Residue Q169 coordinates phosphoenolpyruvate. D315 acts as the Proton acceptor in catalysis. Residues R346 and R387 each coordinate phosphoenolpyruvate.

It belongs to the EPSP synthase family. As to quaternary structure, monomer.

It localises to the cytoplasm. It carries out the reaction 3-phosphoshikimate + phosphoenolpyruvate = 5-O-(1-carboxyvinyl)-3-phosphoshikimate + phosphate. It functions in the pathway metabolic intermediate biosynthesis; chorismate biosynthesis; chorismate from D-erythrose 4-phosphate and phosphoenolpyruvate: step 6/7. Functionally, catalyzes the transfer of the enolpyruvyl moiety of phosphoenolpyruvate (PEP) to the 5-hydroxyl of shikimate-3-phosphate (S3P) to produce enolpyruvyl shikimate-3-phosphate and inorganic phosphate. This Thermus thermophilus (strain ATCC 27634 / DSM 579 / HB8) protein is 3-phosphoshikimate 1-carboxyvinyltransferase.